The chain runs to 318 residues: Transaldolase (318 aa).

The active-site Schiff-base intermediate with substrate is the lysine 132.

Belongs to the transaldolase family. Type 1 subfamily. In terms of assembly, homodimer.

It localises to the cytoplasm. The catalysed reaction is D-sedoheptulose 7-phosphate + D-glyceraldehyde 3-phosphate = D-erythrose 4-phosphate + beta-D-fructose 6-phosphate. Its pathway is carbohydrate degradation; pentose phosphate pathway; D-glyceraldehyde 3-phosphate and beta-D-fructose 6-phosphate from D-ribose 5-phosphate and D-xylulose 5-phosphate (non-oxidative stage): step 2/3. In terms of biological role, transaldolase is important for the balance of metabolites in the pentose-phosphate pathway. This chain is Transaldolase, found in Shewanella oneidensis (strain ATCC 700550 / JCM 31522 / CIP 106686 / LMG 19005 / NCIMB 14063 / MR-1).